The chain runs to 149 residues: Nascent polypeptide-associated complex subunit beta-2 (149 aa).

One can recognise an NAC-A/B domain in the interval 38–103 (DKDNTKLQAE…PKENTLNGLY (66 aa)).

This sequence belongs to the NAC-beta family. Part of the nascent polypeptide-associated complex (NAC), consisting of EGD2 and either EGD1 or BTT1. NAC associates with ribosomes via EGD1 or BTT1.

It is found in the cytoplasm. The protein resides in the nucleus. Functionally, acts as a component of the nascent polypeptide-associated complex (NAC), which promotes mitochondrial protein import by enhancing productive ribosome interactions with the outer mitochondrial membrane. Also blocks the inappropriate interaction of ribosomes translating non-secretory nascent polypeptides with translocation sites in the membrane of the endoplasmic reticulum. BTT1 may act as a transcription factor that exert a negative effect on the expression of several genes that are transcribed by RNA polymerase II. The chain is Nascent polypeptide-associated complex subunit beta-2 (BTT1) from Saccharomyces cerevisiae (strain ATCC 204508 / S288c) (Baker's yeast).